The sequence spans 155 residues: SsrA-binding protein (155 aa).

The protein belongs to the SmpB family.

It is found in the cytoplasm. In terms of biological role, required for rescue of stalled ribosomes mediated by trans-translation. Binds to transfer-messenger RNA (tmRNA), required for stable association of tmRNA with ribosomes. tmRNA and SmpB together mimic tRNA shape, replacing the anticodon stem-loop with SmpB. tmRNA is encoded by the ssrA gene; the 2 termini fold to resemble tRNA(Ala) and it encodes a 'tag peptide', a short internal open reading frame. During trans-translation Ala-aminoacylated tmRNA acts like a tRNA, entering the A-site of stalled ribosomes, displacing the stalled mRNA. The ribosome then switches to translate the ORF on the tmRNA; the nascent peptide is terminated with the 'tag peptide' encoded by the tmRNA and targeted for degradation. The ribosome is freed to recommence translation, which seems to be the essential function of trans-translation. This is SsrA-binding protein from Geobacillus thermodenitrificans (strain NG80-2).